The following is a 506-amino-acid chain: Cysteine--tRNA ligase (506 aa).

Residue cysteine 34 participates in Zn(2+) binding. The short motif at 36–46 (PTVYDFAHIGN) is the 'HIGH' region element. 3 residues coordinate Zn(2+): cysteine 230, histidine 269, and glutamate 273. A 'KMSKS' region motif is present at residues 302-306 (KMSKS). Lysine 305 provides a ligand contact to ATP.

This sequence belongs to the class-I aminoacyl-tRNA synthetase family. In terms of assembly, monomer. It depends on Zn(2+) as a cofactor.

Its subcellular location is the cytoplasm. It carries out the reaction tRNA(Cys) + L-cysteine + ATP = L-cysteinyl-tRNA(Cys) + AMP + diphosphate. In Brucella suis biovar 1 (strain 1330), this protein is Cysteine--tRNA ligase.